We begin with the raw amino-acid sequence, 198 residues long: Probable GTP-binding protein EngB (198 aa).

Positions N21 to G195 constitute an EngB-type G domain. GTP-binding positions include G29–S36, G56–L60, D81–G84, T151–D154, and V174–N176. Residues S36 and T58 each coordinate Mg(2+).

This sequence belongs to the TRAFAC class TrmE-Era-EngA-EngB-Septin-like GTPase superfamily. EngB GTPase family. Requires Mg(2+) as cofactor.

Necessary for normal cell division and for the maintenance of normal septation. The protein is Probable GTP-binding protein EngB of Campylobacter jejuni subsp. jejuni serotype O:6 (strain 81116 / NCTC 11828).